Reading from the N-terminus, the 374-residue chain is Carbamoyl phosphate synthase small chain (374 aa).

The tract at residues 1–183 (MVLADGQMIW…QNGYSVVDNQ (183 aa)) is CPSase. Positions 41, 235, and 237 each coordinate L-glutamine. Positions 187–374 (HVVAIDYGLK…FIDLIAKERP (188 aa)) constitute a Glutamine amidotransferase type-1 domain. Residue Cys264 is the Nucleophile of the active site. Leu265, Gln268, Asn306, Gly308, and Phe309 together coordinate L-glutamine. Residues His348 and Glu350 contribute to the active site.

The protein belongs to the CarA family. Composed of two chains; the small (or glutamine) chain promotes the hydrolysis of glutamine to ammonia, which is used by the large (or ammonia) chain to synthesize carbamoyl phosphate. Tetramer of heterodimers (alpha,beta)4.

The enzyme catalyses hydrogencarbonate + L-glutamine + 2 ATP + H2O = carbamoyl phosphate + L-glutamate + 2 ADP + phosphate + 2 H(+). It carries out the reaction L-glutamine + H2O = L-glutamate + NH4(+). The protein operates within amino-acid biosynthesis; L-arginine biosynthesis; carbamoyl phosphate from bicarbonate: step 1/1. Its pathway is pyrimidine metabolism; UMP biosynthesis via de novo pathway; (S)-dihydroorotate from bicarbonate: step 1/3. Small subunit of the glutamine-dependent carbamoyl phosphate synthetase (CPSase). CPSase catalyzes the formation of carbamoyl phosphate from the ammonia moiety of glutamine, carbonate, and phosphate donated by ATP, constituting the first step of 2 biosynthetic pathways, one leading to arginine and/or urea and the other to pyrimidine nucleotides. The small subunit (glutamine amidotransferase) binds and cleaves glutamine to supply the large subunit with the substrate ammonia. The sequence is that of Carbamoyl phosphate synthase small chain from Zymomonas mobilis subsp. mobilis (strain ATCC 31821 / ZM4 / CP4).